Here is a 163-residue protein sequence, read N- to C-terminus: Nucleotide-binding protein BcerKBAB4_1061 (163 aa).

It belongs to the YajQ family.

Nucleotide-binding protein. In Bacillus mycoides (strain KBAB4) (Bacillus weihenstephanensis), this protein is Nucleotide-binding protein BcerKBAB4_1061.